Here is a 490-residue protein sequence, read N- to C-terminus: Glutathione reductase (490 aa).

Residues serine 19 and glycine 20 each coordinate FAD. Residue serine 19 coordinates glutathione. Arginine 26 is a glutathione binding site. Residues glutamate 39, threonine 48, cysteine 49, and lysine 57 each contribute to the FAD site. Cysteine 49 and cysteine 54 are joined by a disulfide. Glutathione is bound at residue tyrosine 110. Alanine 126 contributes to the FAD binding site. 5 residues coordinate NADP(+): alanine 208, isoleucine 211, glutamate 214, arginine 231, and arginine 237. Residue serine 246 coordinates glutathione. An NADP(+)-binding site is contributed by glycine 297. Aspartate 337 contacts FAD. Glutamate 343 contacts NADP(+). Residue threonine 345 coordinates FAD. Arginine 353 serves as a coordination point for glutathione. Valine 379 contacts NADP(+). Glutathione is bound at residue lysine 432. Position 479 (histidine 479) interacts with FAD. Catalysis depends on histidine 479, which acts as the Proton acceptor.

The protein belongs to the class-I pyridine nucleotide-disulfide oxidoreductase family. In terms of assembly, homodimer. Requires FAD as cofactor.

The protein resides in the cytoplasm. It is found in the mitochondrion. The catalysed reaction is 2 glutathione + NADP(+) = glutathione disulfide + NADPH + H(+). In terms of biological role, catalyzes the reduction of glutathione disulfide (GSSG) to reduced glutathione (GSH). Constitutes the major mechanism to maintain a high GSH:GSSG ratio in the cytosol. The sequence is that of Glutathione reductase (GLR1) from Debaryomyces hansenii (strain ATCC 36239 / CBS 767 / BCRC 21394 / JCM 1990 / NBRC 0083 / IGC 2968) (Yeast).